A 116-amino-acid chain; its full sequence is Thioredoxin H-type (116 aa).

Residues 2 to 115 (AEEAQVIACH…HKIAVHAPIT (114 aa)) enclose the Thioredoxin domain. Residues cysteine 39 and cysteine 42 each act as nucleophile in the active site. Cysteine 39 and cysteine 42 are oxidised to a cystine.

The protein belongs to the thioredoxin family. Plant H-type subfamily.

The protein resides in the cytoplasm. Functionally, participates in various redox reactions through the reversible oxidation of the active center dithiol to a disulfide. The H form is known to activate a number of cytosolic enzymes. The protein is Thioredoxin H-type of Fagopyrum esculentum (Common buckwheat).